A 160-amino-acid chain; its full sequence is Monooxygenase AacuO (160 aa).

It belongs to the avfA family.

The protein operates within secondary metabolite biosynthesis. Monooxygenase; part of the gene cluster that mediates the biosynthesis of the tetrahydroxanthone dimer secalonic acid D. The pathway begins with the synthesis of atrochrysone thioester by the polyketide synthase AacuL. The atrochrysone carboxyl ACP thioesterase AacuM then breaks the thioester bond and releases the atrochrysone carboxylic acid from AacuL. Atrochrysone carboxylic acid is decarboxylated by the decarboxylase AacuI, and oxidized by the anthrone oxygenase AacuG to yield emodin. Emodin is then reduced to emodin hydroquinone by a yet unidentified oxidoreductase. A-ring reduction by the short chain dehydrogenase AacuN, dehydration by the scytalone dehydratase-like protein AacuK and probable spontaneous re-oxidation, results in overall deoxygenation to chrysophanol. Baeyer-Villiger oxidation by the Baeyer-Villiger monooxygenase (BVMO) AacuH then yields monodictyphenone. Monodictyphenone is transformed into compounds with the tetrahydroxanthone skeleton via methylesterification by the methyltransferase AacuQ, followed by the action of the flavin-dependent monooxygenase AacuC, the isomerase AacuP, and the short chain dehydrogenase/reductase AacuF or AacuD. AacuF and AacuD should accept the same compound as a substrate but perform the ketoreduction with a different stereoselectivity, thus yielding blennolides B and A, respectively. In the final step of the biosynthesis, the cytochrome P450 monooxygenase AacuE accepts blennolide B and/or blennolide A to conduct the dimerization reaction to furnish the tetrahydroxanthone dimers, secalonic acids D, B, and F. The polypeptide is Monooxygenase AacuO (Aspergillus aculeatus (strain ATCC 16872 / CBS 172.66 / WB 5094)).